The chain runs to 228 residues: Flavin-dependent thymidylate synthase (228 aa).

Positions 1-217 (MEYKILDKGF…PWTFEAFLKF (217 aa)) constitute a ThyX domain. FAD contacts are provided by residues threonine 55, 78–80 (RHR), and glutamate 86. DUMP contacts are provided by residues 75–78 (QWFR), 86–90 (EASLR), and arginine 156. The short motif at 78 to 88 (RHRIGSFNEAS) is the ThyX motif element. FAD-binding positions include 172–174 (NAR) and asparagine 178. Residue arginine 183 coordinates dUMP. Arginine 183 serves as the catalytic Involved in ionization of N3 of dUMP, leading to its activation.

It belongs to the thymidylate synthase ThyX family. As to quaternary structure, homotetramer. Requires FAD as cofactor.

It carries out the reaction dUMP + (6R)-5,10-methylene-5,6,7,8-tetrahydrofolate + NADPH + H(+) = dTMP + (6S)-5,6,7,8-tetrahydrofolate + NADP(+). The protein operates within pyrimidine metabolism; dTTP biosynthesis. In terms of biological role, catalyzes the reductive methylation of 2'-deoxyuridine-5'-monophosphate (dUMP) to 2'-deoxythymidine-5'-monophosphate (dTMP) while utilizing 5,10-methylenetetrahydrofolate (mTHF) as the methyl donor, and NADPH and FADH(2) as the reductant. This chain is Flavin-dependent thymidylate synthase, found in Thermosipho africanus (strain TCF52B).